We begin with the raw amino-acid sequence, 947 residues long: Protocadherin alpha-4 (947 aa).

The first 29 residues, 1–29, serve as a signal peptide directing secretion; it reads MEFSWGSGQESRRLLLLLLLLAAWEAGNG. Cadherin domains lie at 30 to 133, 134 to 242, 243 to 350, 351 to 455, 456 to 565, and 588 to 678; these read QLHY…PPVF, PATQ…APAF, DRTI…VPDL, EFKS…APAF, AQPE…APAL, and GHVV…APKA. The Extracellular portion of the chain corresponds to 30 to 697; that stretch reads QLHYSVSEEA…GPDAALVDVN (668 aa). A disulfide bridge links Cys96 with Cys102. 3 N-linked (GlcNAc...) asparagine glycosylation sites follow: Asn139, Asn257, and Asn265. The N-linked (GlcNAc...) asparagine glycan is linked to Asn548. A helical membrane pass occupies residues 698–718; sequence VYLIIAICAVSSLLVLTLLLY. Residues 719 to 947 are Cytoplasmic-facing; the sequence is TALRCSALPT…GNSTTDNSDQ (229 aa). 6 PXXP repeats span residues 734 to 737, 774 to 777, 796 to 799, 829 to 832, 870 to 873, and 888 to 891; these read PGKP, PSLP, PRQP, PGGP, PGNP, and PGSP. A 6 X 4 AA repeats of P-X-X-P region spans residues 734–891; the sequence is PGKPTLVCSS…PDKFIIPGSP (158 aa). Positions 738–947 are required for interaction with FYN; that stretch reads TLVCSSAVGS…GNSTTDNSDQ (210 aa). Disordered regions lie at residues 754 to 805, 828 to 853, and 868 to 947; these read RRPR…DWRY, GPGG…EVSP, and YGPG…NSDQ. A compositionally biased stretch (basic and acidic residues) spans 906–920; that stretch reads DKSDFITFGKKEETK.

Forms homodimers in trans (molecules expressed by two different cells). Forms promiscuous heterodimers in cis (at the plasma membrane of the same cell) with other protocadherins. Interacts with FYN.

It localises to the cell membrane. Its function is as follows. Calcium-dependent cell-adhesion protein involved in cells self-recognition and non-self discrimination. Thereby, it is involved in the establishment and maintenance of specific neuronal connections in the brain. The protein is Protocadherin alpha-4 of Homo sapiens (Human).